The following is an 899-amino-acid chain: Translation initiation factor IF-2 (899 aa).

Disordered regions lie at residues 94 to 167 and 259 to 309; these read TFTK…VVVK and FNQE…HGFE. Positions 107-121 are enriched in basic and acidic residues; that stretch reads AKARQETEERTRPQE. Positions 147 to 164 are enriched in low complexity; sequence RAAQQKETAKTTSTTTEV. In terms of domain architecture, tr-type G spans 399 to 568; sequence TRPPVVTIMG…LIQSELMELK (170 aa). A G1 region spans residues 408 to 415; it reads GHVDHGKT. 408-415 is a binding site for GTP; it reads GHVDHGKT. The segment at 433 to 437 is G2; sequence GITQH. Positions 454–457 are G3; that stretch reads DTPG. Residues 454–458 and 508–511 each bind GTP; these read DTPGH and NKMD. The interval 508–511 is G4; sequence NKMD. Positions 544–546 are G5; that stretch reads SAH.

It belongs to the TRAFAC class translation factor GTPase superfamily. Classic translation factor GTPase family. IF-2 subfamily.

The protein resides in the cytoplasm. One of the essential components for the initiation of protein synthesis. Protects formylmethionyl-tRNA from spontaneous hydrolysis and promotes its binding to the 30S ribosomal subunits. Also involved in the hydrolysis of GTP during the formation of the 70S ribosomal complex. The protein is Translation initiation factor IF-2 of Acinetobacter baylyi (strain ATCC 33305 / BD413 / ADP1).